We begin with the raw amino-acid sequence, 116 residues long: UPF0127 protein PF1050 (116 aa).

It belongs to the UPF0127 family.

In Pyrococcus furiosus (strain ATCC 43587 / DSM 3638 / JCM 8422 / Vc1), this protein is UPF0127 protein PF1050.